Reading from the N-terminus, the 142-residue chain is Hemoglobin subunit alpha-A (142 aa).

Positions 2-142 (VLSANDKTNV…VGNVLTAKYR (141 aa)) constitute a Globin domain. Residue His59 coordinates O2. His88 contributes to the heme b binding site.

This sequence belongs to the globin family. As to quaternary structure, heterotetramer of two alpha chains and two beta chains. Red blood cells.

In terms of biological role, involved in oxygen transport from the lung to the various peripheral tissues. In Aegypius monachus (Cinereous vulture), this protein is Hemoglobin subunit alpha-A (HBAA).